The sequence spans 125 residues: Ribosome-binding factor A (125 aa).

The protein belongs to the RbfA family. As to quaternary structure, monomer. Binds 30S ribosomal subunits, but not 50S ribosomal subunits or 70S ribosomes.

The protein resides in the cytoplasm. Its function is as follows. One of several proteins that assist in the late maturation steps of the functional core of the 30S ribosomal subunit. Associates with free 30S ribosomal subunits (but not with 30S subunits that are part of 70S ribosomes or polysomes). Required for efficient processing of 16S rRNA. May interact with the 5'-terminal helix region of 16S rRNA. This chain is Ribosome-binding factor A, found in Acidovorax sp. (strain JS42).